The chain runs to 508 residues: Light-independent protochlorophyllide reductase subunit B (508 aa).

Asp-36 is a binding site for [4Fe-4S] cluster. Asp-294 serves as the catalytic Proton donor. A substrate-binding site is contributed by 429–430; that stretch reads GM.

The protein belongs to the ChlB/BchB/BchZ family. As to quaternary structure, protochlorophyllide reductase is composed of three subunits; ChlL, ChlN and ChlB. Forms a heterotetramer of two ChlB and two ChlN subunits. [4Fe-4S] cluster serves as cofactor.

It catalyses the reaction chlorophyllide a + oxidized 2[4Fe-4S]-[ferredoxin] + 2 ADP + 2 phosphate = protochlorophyllide a + reduced 2[4Fe-4S]-[ferredoxin] + 2 ATP + 2 H2O. The protein operates within porphyrin-containing compound metabolism; chlorophyll biosynthesis (light-independent). Its function is as follows. Component of the dark-operative protochlorophyllide reductase (DPOR) that uses Mg-ATP and reduced ferredoxin to reduce ring D of protochlorophyllide (Pchlide) to form chlorophyllide a (Chlide). This reaction is light-independent. The NB-protein (ChlN-ChlB) is the catalytic component of the complex. The chain is Light-independent protochlorophyllide reductase subunit B from Synechocystis sp. (strain ATCC 27184 / PCC 6803 / Kazusa).